The sequence spans 426 residues: Histidine--tRNA ligase (426 aa).

Belongs to the class-II aminoacyl-tRNA synthetase family. As to quaternary structure, homodimer.

Its subcellular location is the cytoplasm. It catalyses the reaction tRNA(His) + L-histidine + ATP = L-histidyl-tRNA(His) + AMP + diphosphate + H(+). In Streptococcus pyogenes serotype M49 (strain NZ131), this protein is Histidine--tRNA ligase.